Here is a 433-residue protein sequence, read N- to C-terminus: Serine--tRNA ligase (433 aa).

L-serine is bound at residue 235–237; sequence TSE. 266 to 268 contributes to the ATP binding site; it reads RSE. Residue glutamate 289 participates in L-serine binding. 353–356 is an ATP binding site; it reads EISS. Serine 388 is a binding site for L-serine.

This sequence belongs to the class-II aminoacyl-tRNA synthetase family. Type-1 seryl-tRNA synthetase subfamily. In terms of assembly, homodimer. The tRNA molecule binds across the dimer.

The protein resides in the cytoplasm. The enzyme catalyses tRNA(Ser) + L-serine + ATP = L-seryl-tRNA(Ser) + AMP + diphosphate + H(+). The catalysed reaction is tRNA(Sec) + L-serine + ATP = L-seryl-tRNA(Sec) + AMP + diphosphate + H(+). It participates in aminoacyl-tRNA biosynthesis; selenocysteinyl-tRNA(Sec) biosynthesis; L-seryl-tRNA(Sec) from L-serine and tRNA(Sec): step 1/1. In terms of biological role, catalyzes the attachment of serine to tRNA(Ser). Is also able to aminoacylate tRNA(Sec) with serine, to form the misacylated tRNA L-seryl-tRNA(Sec), which will be further converted into selenocysteinyl-tRNA(Sec). The chain is Serine--tRNA ligase from Burkholderia vietnamiensis (strain G4 / LMG 22486) (Burkholderia cepacia (strain R1808)).